The following is a 145-amino-acid chain: Transcriptional regulator SlyA (145 aa).

Residues 2-135 (ELPLGSDLAR…LALLVARLEK (134 aa)) enclose the HTH marR-type domain. Positions 49 to 72 (QIQLAKAIGIEQPSLVRTLDQLEE) form a DNA-binding region, H-T-H motif.

It belongs to the SlyA family. Homodimer.

Its function is as follows. Transcription regulator that can specifically activate or repress expression of target genes. The polypeptide is Transcriptional regulator SlyA (Pectobacterium carotovorum subsp. carotovorum (strain PC1)).